Reading from the N-terminus, the 881-residue chain is MTTETGPDSEVKKAQEEAPQQPEAAAAVTTPVTPAGHGHPEANSNEKHPSQQDTRPAEQSLDMEEKDYSEADGLSERTTPSKAQKSPQKIAKKYKSAICRVTLLDASEYECEVEKHGRGQVLFDLVCEHLNLLEKDYFGLTFCDADSQKNWLDPSKEIKKQIRSSPWNFAFTVKFYPPDPAQLTEDITRYYLCLQLRADIITGRLPCSFVTHALLGSYAVQAELGDYDAEEHVGNYVSELRFAPNQTRELEERIMELHKTYRGMTPGEAEIHFLENAKKLSMYGVDLHHAKDSEGIDIMLGVCANGLLIYRDRLRINRFAWPKILKISYKRSNFYIKIRPGEYEQFESTIGFKLPNHRSAKRLWKVCIEHHTFFRLVSPEPPPKGFLVMGSKFRYSGRTQAQTRQASALIDRPAPFFERSSSKRYTMSRSLDGAEFSRPASVSENHDAGPDGDKRDEDGESGGQRSEAEEGEVRTPTKIKELKPEQETTPRHKQEFLDKPEDVLLKHQASINELKRTLKEPNSKLIHRDRDWERERRLPSSPASPSPKGTPEKANERAGLREGSEEKVKPPRPRAPESDTGDEDQDQERDTVFLKDNHLAIERKCSSITVSSTSSLEAEVDFTVIGDYHGSAFEDFSRSLPELDRDKSDSDTEGLLFSRDLNKGAPSQDDESGGIEDSPDRGACSTPDMPQFEPVKTETMTVSSLAIRKKIEPEAVLQTRVSAMDNTQQVDGSASVGREFIATTPSITTETISTTMENSLKSGKGAAAMIPGPQTVATEIRSLSPIIGKDVLTSTYGATAETLSTSTTTHVTKTVKGGFSETRIEKRIIITGDEDVDQDQALALAIKEAKLQHPDMLVTKAVVYRETDPSPEERDKKPQES.

Position 1 is an N-acetylmethionine (Met1). The disordered stretch occupies residues 1–88 (MTTETGPDSE…TPSKAQKSPQ (88 aa)). A compositionally biased stretch (low complexity) spans 17–35 (EAPQQPEAAAAVTTPVTPA). A Phosphothreonine modification is found at Thr30. Basic and acidic residues predominate over residues 38–50 (GHPEANSNEKHPS). Ser75 is modified (phosphoserine). Polar residues predominate over residues 76-87 (ERTTPSKAQKSP). At Thr79 the chain carries Phosphothreonine. The region spanning 97–378 (AICRVTLLDA…EHHTFFRLVS (282 aa)) is the FERM domain. Phosphotyrosine is present on Tyr343. Residues Ser378, Ser430, and Ser437 each carry the phosphoserine modification. Residues 428-501 (SRSLDGAEFS…HKQEFLDKPE (74 aa)) are disordered. Basic and acidic residues predominate over residues 444–457 (ENHDAGPDGDKRDE). Phosphoserine occurs at positions 461 and 466. Basic and acidic residues predominate over residues 466 to 501 (SEAEEGEVRTPTKIKELKPEQETTPRHKQEFLDKPE). Thr475 bears the Phosphothreonine mark. Positions 483–541 (KPEQETTPRHKQEFLDKPEDVLLKHQASINELKRTLKEPNSKLIHRDRDWERERRLPSS) are spectrin--actin-binding. Position 510 is a phosphoserine (Ser510). Residues 514-538 (LKRTLKEPNSKLIHRDRDWERERRL) show a composition bias toward basic and acidic residues. The tract at residues 514-596 (LKRTLKEPNS…QERDTVFLKD (83 aa)) is disordered. 4 positions are modified to phosphoserine: Ser540, Ser541, Ser544, and Ser546. Thr550 bears the Phosphothreonine mark. The segment covering 550-577 (TPEKANERAGLREGSEEKVKPPRPRAPE) has biased composition (basic and acidic residues). Phosphoserine is present on residues Ser564 and Ser578. At Thr580 the chain carries Phosphothreonine. Ser639, Ser648, Ser650, Ser667, Ser672, Ser678, and Ser685 each carry phosphoserine. Positions 642-699 (ELDRDKSDSDTEGLLFSRDLNKGAPSQDDESGGIEDSPDRGACSTPDMPQFEPVKTET) are disordered. Residue Thr686 is modified to Phosphothreonine. 3 positions are modified to phosphoserine: Ser722, Ser784, and Ser870. The C-terminal (CTD) stretch occupies residues 746 to 881 (SITTETISTT…EERDKKPQES (136 aa)).

As to quaternary structure, interacts with AGAP2. Highest expression in brain, lower in heart, kidney, pancreas, placenta, lung and skeletal muscle.

It is found in the cytoplasm. Its subcellular location is the cytoskeleton. Its function is as follows. May function to confer stability and plasticity to neuronal membrane via multiple interactions, including the spectrin-actin-based cytoskeleton, integral membrane channels and membrane-associated guanylate kinases. This is Band 4.1-like protein 1 from Homo sapiens (Human).